A 154-amino-acid chain; its full sequence is Ribonuclease H (154 aa).

The RNase H type-1 domain maps to 1–142 (MTPKLVIYTD…ADELARLGML (142 aa)). Mg(2+) contacts are provided by Asp-10, Glu-48, Asp-70, and Asp-134.

The protein belongs to the RNase H family. Monomer. Mg(2+) serves as cofactor.

Its subcellular location is the cytoplasm. It carries out the reaction Endonucleolytic cleavage to 5'-phosphomonoester.. Its function is as follows. Endonuclease that specifically degrades the RNA of RNA-DNA hybrids. This Caulobacter sp. (strain K31) protein is Ribonuclease H.